The primary structure comprises 220 residues: Adapter protein MecA (220 aa).

The protein belongs to the MecA family. In terms of assembly, homodimer.

Its function is as follows. Enables the recognition and targeting of unfolded and aggregated proteins to the ClpC protease or to other proteins involved in proteolysis. This chain is Adapter protein MecA, found in Enterococcus faecalis (strain ATCC 700802 / V583).